We begin with the raw amino-acid sequence, 77 residues long: UPF0291 protein OB1671 (77 aa).

The interval 56-77 (DPEGKDVTPQKLRDYQDRNKKH) is disordered. Residues 57–77 (PEGKDVTPQKLRDYQDRNKKH) are compositionally biased toward basic and acidic residues.

Belongs to the UPF0291 family.

It localises to the cytoplasm. The polypeptide is UPF0291 protein OB1671 (Oceanobacillus iheyensis (strain DSM 14371 / CIP 107618 / JCM 11309 / KCTC 3954 / HTE831)).